The chain runs to 231 residues: Putative N-acetylmannosamine-6-phosphate 2-epimerase (231 aa).

This sequence belongs to the NanE family.

The catalysed reaction is an N-acyl-D-glucosamine 6-phosphate = an N-acyl-D-mannosamine 6-phosphate. Its pathway is amino-sugar metabolism; N-acetylneuraminate degradation; D-fructose 6-phosphate from N-acetylneuraminate: step 3/5. In terms of biological role, converts N-acetylmannosamine-6-phosphate (ManNAc-6-P) to N-acetylglucosamine-6-phosphate (GlcNAc-6-P). The chain is Putative N-acetylmannosamine-6-phosphate 2-epimerase from Glaesserella parasuis serovar 5 (strain SH0165) (Haemophilus parasuis).